Reading from the N-terminus, the 144-residue chain is Small ribosomal subunit protein uS12 (144 aa).

Aspartate 103 carries the 3-methylthioaspartic acid modification. The interval 121–144 is disordered; the sequence is VANRKQGRSKYGTKKASAVPAKKK.

This sequence belongs to the universal ribosomal protein uS12 family. As to quaternary structure, part of the 30S ribosomal subunit. Contacts proteins S8 and S17. May interact with IF1 in the 30S initiation complex.

In terms of biological role, with S4 and S5 plays an important role in translational accuracy. Its function is as follows. Interacts with and stabilizes bases of the 16S rRNA that are involved in tRNA selection in the A site and with the mRNA backbone. Located at the interface of the 30S and 50S subunits, it traverses the body of the 30S subunit contacting proteins on the other side and probably holding the rRNA structure together. The combined cluster of proteins S8, S12 and S17 appears to hold together the shoulder and platform of the 30S subunit. The sequence is that of Small ribosomal subunit protein uS12 from Roseiflexus castenholzii (strain DSM 13941 / HLO8).